Consider the following 194-residue polypeptide: Peptidyl-tRNA hydrolase (194 aa).

Y17 is a tRNA binding site. H22 functions as the Proton acceptor in the catalytic mechanism. TRNA contacts are provided by Y68, N70, and N116.

It belongs to the PTH family. In terms of assembly, monomer.

Its subcellular location is the cytoplasm. It carries out the reaction an N-acyl-L-alpha-aminoacyl-tRNA + H2O = an N-acyl-L-amino acid + a tRNA + H(+). Its function is as follows. Hydrolyzes ribosome-free peptidyl-tRNAs (with 1 or more amino acids incorporated), which drop off the ribosome during protein synthesis, or as a result of ribosome stalling. Functionally, catalyzes the release of premature peptidyl moieties from peptidyl-tRNA molecules trapped in stalled 50S ribosomal subunits, and thus maintains levels of free tRNAs and 50S ribosomes. This Pseudomonas savastanoi pv. phaseolicola (strain 1448A / Race 6) (Pseudomonas syringae pv. phaseolicola (strain 1448A / Race 6)) protein is Peptidyl-tRNA hydrolase.